Here is a 207-residue protein sequence, read N- to C-terminus: Large ribosomal subunit protein uL4 (207 aa).

It belongs to the universal ribosomal protein uL4 family. In terms of assembly, part of the 50S ribosomal subunit.

One of the primary rRNA binding proteins, this protein initially binds near the 5'-end of the 23S rRNA. It is important during the early stages of 50S assembly. It makes multiple contacts with different domains of the 23S rRNA in the assembled 50S subunit and ribosome. In terms of biological role, forms part of the polypeptide exit tunnel. The polypeptide is Large ribosomal subunit protein uL4 (Erythrobacter litoralis (strain HTCC2594)).